The chain runs to 891 residues: Valine--tRNA ligase (891 aa).

The short motif at P43 to H53 is the 'HIGH' region element. Positions K536–S540 match the 'KMSKS' region motif. K539 serves as a coordination point for ATP.

Belongs to the class-I aminoacyl-tRNA synthetase family. ValS type 2 subfamily.

It is found in the cytoplasm. The enzyme catalyses tRNA(Val) + L-valine + ATP = L-valyl-tRNA(Val) + AMP + diphosphate. Functionally, catalyzes the attachment of valine to tRNA(Val). As ValRS can inadvertently accommodate and process structurally similar amino acids such as threonine, to avoid such errors, it has a 'posttransfer' editing activity that hydrolyzes mischarged Thr-tRNA(Val) in a tRNA-dependent manner. The polypeptide is Valine--tRNA ligase (Pyrococcus abyssi (strain GE5 / Orsay)).